The sequence spans 425 residues: Cyanogenic beta-glucosidase (425 aa).

A signal peptide spans 1–11 (LLSITTTHIHA). Residues glutamine 44, histidine 148, and 193–194 (NE) contribute to the a beta-D-glucoside site. Glutamate 194 acts as the Proton donor in catalysis. An intrachain disulfide couples cysteine 213 to cysteine 221. Asparagine 220 is a glycosylation site (N-linked (GlcNAc...) asparagine). Tyrosine 337 and glutamate 408 together coordinate a beta-D-glucoside. Residue glutamate 408 is the Nucleophile of the active site. The N-linked (GlcNAc...) asparagine glycan is linked to asparagine 412.

The protein belongs to the glycosyl hydrolase 1 family. In terms of assembly, homodimer. In terms of tissue distribution, leaves.

It carries out the reaction Hydrolysis of terminal, non-reducing beta-D-glucosyl residues with release of beta-D-glucose.. Hydrolyzes cyanoglucosides, contributing to the release of hydrocyanic acid, which functions as a defense mechanism against small predators, when the leaf tissue is damaged. The chain is Cyanogenic beta-glucosidase (LI) from Trifolium repens (Creeping white clover).